A 359-amino-acid chain; its full sequence is Phosphate acyltransferase (359 aa).

Residues S335–A359 are disordered.

The protein belongs to the PlsX family. As to quaternary structure, homodimer. Probably interacts with PlsY.

It localises to the cytoplasm. The catalysed reaction is a fatty acyl-[ACP] + phosphate = an acyl phosphate + holo-[ACP]. Its pathway is lipid metabolism; phospholipid metabolism. In terms of biological role, catalyzes the reversible formation of acyl-phosphate (acyl-PO(4)) from acyl-[acyl-carrier-protein] (acyl-ACP). This enzyme utilizes acyl-ACP as fatty acyl donor, but not acyl-CoA. The chain is Phosphate acyltransferase from Cupriavidus metallidurans (strain ATCC 43123 / DSM 2839 / NBRC 102507 / CH34) (Ralstonia metallidurans).